The chain runs to 561 residues: Membrane protein insertase YidC (561 aa).

Helical transmembrane passes span 7-27 (ILIV…NQDY), 342-362 (LELT…FWLL), 368-388 (LLGN…GLFF), 438-458 (LGGC…YWVL), 469-489 (WMLW…PIIM), and 516-536 (PIIF…YWVV).

The protein belongs to the OXA1/ALB3/YidC family. Type 1 subfamily. Interacts with the Sec translocase complex via SecD. Specifically interacts with transmembrane segments of nascent integral membrane proteins during membrane integration.

Its subcellular location is the cell inner membrane. Functionally, required for the insertion and/or proper folding and/or complex formation of integral membrane proteins into the membrane. Involved in integration of membrane proteins that insert both dependently and independently of the Sec translocase complex, as well as at least some lipoproteins. Aids folding of multispanning membrane proteins. The sequence is that of Membrane protein insertase YidC from Pseudomonas entomophila (strain L48).